Consider the following 369-residue polypeptide: MPDVKTASHTVGTAEDRVDLKTMGRAGLKDFVAEHGAPRYRGDQLFNWVYGKGVSDFDRMSNLPKRMRRGLQRDATVEDIEIVEQQQAADRTVKALFELPSGREAETVLIPAIDERGEARRLTVCVSSEVGCAMGCEFCATGRMGFRENLTPGAIFDQVWHMNEVAQEHFGRPVTNIVFMGMGEPLLNYDAVLDSISILTDEDSLNLSAQKITVSTVGLARRIKDLADDQLRTNLAVSLHAPDNETRSRIMPVNEAEKTSLPALKEALQYYFDKTGRQITYEYCLFKGVNDSETDARNLADVTRWAPSKVNLLMYNPVEGLNFERTSEAQLDRFVQVLVQEGVTVTVRRSRGQDIDAACGQLANEGEDA.

The Proton acceptor role is filled by Glu-106. Residues 118 to 354 enclose the Radical SAM core domain; it reads EARRLTVCVS…VTVRRSRGQD (237 aa). Cys-125 and Cys-359 form a disulfide bridge. The [4Fe-4S] cluster site is built by Cys-132, Cys-136, and Cys-139. S-adenosyl-L-methionine-binding positions include 183-184, Ser-215, 238-240, and Asn-316; these read GE and SLH. Residue Cys-359 is the S-methylcysteine intermediate of the active site.

It belongs to the radical SAM superfamily. RlmN family. The cofactor is [4Fe-4S] cluster.

The protein resides in the cytoplasm. The catalysed reaction is adenosine(2503) in 23S rRNA + 2 reduced [2Fe-2S]-[ferredoxin] + 2 S-adenosyl-L-methionine = 2-methyladenosine(2503) in 23S rRNA + 5'-deoxyadenosine + L-methionine + 2 oxidized [2Fe-2S]-[ferredoxin] + S-adenosyl-L-homocysteine. It catalyses the reaction adenosine(37) in tRNA + 2 reduced [2Fe-2S]-[ferredoxin] + 2 S-adenosyl-L-methionine = 2-methyladenosine(37) in tRNA + 5'-deoxyadenosine + L-methionine + 2 oxidized [2Fe-2S]-[ferredoxin] + S-adenosyl-L-homocysteine. Functionally, specifically methylates position 2 of adenine 2503 in 23S rRNA and position 2 of adenine 37 in tRNAs. In Salinibacter ruber (strain DSM 13855 / M31), this protein is Probable dual-specificity RNA methyltransferase RlmN.